The primary structure comprises 308 residues: Glutaminase (308 aa).

Residues Ser68, Asn118, Glu162, Asn169, Tyr193, Tyr244, and Val262 each contribute to the substrate site.

The protein belongs to the glutaminase family. In terms of assembly, homotetramer.

It carries out the reaction L-glutamine + H2O = L-glutamate + NH4(+). This Hahella chejuensis (strain KCTC 2396) protein is Glutaminase.